The chain runs to 138 residues: Small ribosomal subunit protein uS12 (138 aa).

The tract at residues 33 to 55 (KEHTNVSSPQKRGVCTRVGTMTP) is disordered. Position 102 is a 3-methylthioaspartic acid (aspartate 102).

This sequence belongs to the universal ribosomal protein uS12 family. In terms of assembly, part of the 30S ribosomal subunit. Contacts proteins S8 and S17. May interact with IF1 in the 30S initiation complex.

Its function is as follows. With S4 and S5 plays an important role in translational accuracy. Interacts with and stabilizes bases of the 16S rRNA that are involved in tRNA selection in the A site and with the mRNA backbone. Located at the interface of the 30S and 50S subunits, it traverses the body of the 30S subunit contacting proteins on the other side and probably holding the rRNA structure together. The combined cluster of proteins S8, S12 and S17 appears to hold together the shoulder and platform of the 30S subunit. This Bacillus velezensis (strain DSM 23117 / BGSC 10A6 / LMG 26770 / FZB42) (Bacillus amyloliquefaciens subsp. plantarum) protein is Small ribosomal subunit protein uS12.